A 400-amino-acid polypeptide reads, in one-letter code: MSVYQATASAPVNIACIKYWGKRDTKLILPTNSSLSVTLDQDHLRSTTTARADPSFQKDRLWLNGTEDEIKDGGRLATCIKEMKALRKQLEDKDASLPKISSYSVHISSRNNFPTAAGLASSASGFAALVASLAALYKLPTSQSDLSRIARQGSGSACRSLFGGFVAWQMGELPDGSDSLAVEIAPREHWPDIHALICVVNDEKKGTSSTAGMQRTVETSPLLQHRIKHVVPARMAAISAAIRTRDFDAFARITMQDSNQFHAVALDTEPPIFYMNDVSRAIIALIVEYNRVAVEKTGKLKAAYTYDAGPNAVIYTPKEHIKEIVELIVKYFPQAENFKDPFGLFGAAGVQGKVVDGFNEAVSKPFGVGAVKGLIHTRVGDGPRTLGPEEALLSPDGLPK.

Residues 19-22, R75, 154-159, and T210 each bind (R)-5-diphosphomevalonate; these read YWGK and SGSACR. The disordered stretch occupies residues 381 to 400; the sequence is DGPRTLGPEEALLSPDGLPK.

It belongs to the diphosphomevalonate decarboxylase family.

It carries out the reaction (R)-5-diphosphomevalonate + ATP = isopentenyl diphosphate + ADP + phosphate + CO2. It functions in the pathway isoprenoid biosynthesis; isopentenyl diphosphate biosynthesis via mevalonate pathway; isopentenyl diphosphate from (R)-mevalonate: step 3/3. Functionally, diphosphomevalonate decarboxylase; part of the second module of ergosterol biosynthesis pathway that includes the middle steps of the pathway. The second module involves the formation of farnesyl diphosphate, which is also an important intermediate in the biosynthesis of ubiquinone, dolichol, heme and prenylated proteins. This module also plays a key role in the biosynthesis of triterpenes such as ganoderic acids (GA), a group of highly oxygenated lanostane-type triterpenoids which are well recognized as a main group of unique bioactive compounds in the medicinal mushroom Ganoderma lucidum. Activity by the mevalonate kinase first converts mevalonate into 5-phosphomevalonate. 5-phosphomevalonate is then further converted to 5-diphosphomevalonate by the phosphomevalonate kinase. The diphosphomevalonate decarboxylase MVD then produces isopentenyl diphosphate. The isopentenyl-diphosphate delta-isomerase then catalyzes the 1,3-allylic rearrangement of the homoallylic substrate isopentenyl (IPP) to its highly electrophilic allylic isomer, dimethylallyl diphosphate (DMAPP). Finally the farnesyl diphosphate synthase FPS catalyzes the sequential condensation of isopentenyl pyrophosphate with dimethylallyl pyrophosphate, and then with the resultant geranylpyrophosphate to the ultimate product farnesyl pyrophosphate. This Ganoderma lucidum (Ling zhi medicinal fungus) protein is Diphosphomevalonate decarboxylase.